Reading from the N-terminus, the 158-residue chain is uncharacterized protein (158 aa).

Residues 1 to 22 form the signal peptide; that stretch reads MKKIPNKLLAVSAFLTITTTYA. The helical transmembrane segment at 120–140 threads the bilayer; the sequence is LTGIIEYDTKFENHYETLVEA.

It is found in the cell membrane. This is an uncharacterized protein from Bacillus cereus.